We begin with the raw amino-acid sequence, 175 residues long: MELTVGRVVKAHGISGEIVVEIRTDDPAARFAPGNTLRAKPSRGGPERSCVIESAREHGGRLLVRLAGVTDRDAADALRGTLFVVDSAELPDIDEPDTYYDHQLEGLQVRTTGGQRVGAVAEVLHTAAGELLAVRDDADGAPREVLVPFVSAIVTAVSLDDGLIEIDPPDGLLDL.

The PRC barrel domain occupies proline 96–leucine 172.

Belongs to the RimM family. In terms of assembly, binds ribosomal protein uS19.

The protein localises to the cytoplasm. In terms of biological role, an accessory protein needed during the final step in the assembly of 30S ribosomal subunit, possibly for assembly of the head region. Essential for efficient processing of 16S rRNA. May be needed both before and after RbfA during the maturation of 16S rRNA. It has affinity for free ribosomal 30S subunits but not for 70S ribosomes. The polypeptide is Ribosome maturation factor RimM (Mycobacterium avium (strain 104)).